Consider the following 509-residue polypeptide: Ribonuclease E/G-like protein (509 aa).

Residues 35-117 (SDIYLGCVDK…LTANITLSGR (83 aa)) form the S1 motif domain. 2 residues coordinate Mg(2+): Asp296 and Asp339.

Belongs to the RNase E/G family. Mg(2+) is required as a cofactor.

The protein resides in the plastid. It localises to the chloroplast stroma. In terms of biological role, involved in intercistronic processing of primary transcripts from chloroplast operons. The endonucleolytic activity of the enzyme depends on the number of phosphates at the 5' end, is inhibited by structured RNA, and preferentially cleaves A/U-rich sequences. The sequence is that of Ribonuclease E/G-like protein (rne) from Pyropia yezoensis (Susabi-nori).